The chain runs to 390 residues: HIT domain-containing protein DDB_G0272839 (390 aa).

Residues 168–201 are disordered; that stretch reads DNENEKEKEKEMELDNDNTNTESIPPITSKSTST. Residues 184–201 show a composition bias toward low complexity; sequence DNTNTESIPPITSKSTST. In terms of domain architecture, HIT spans 232-343; the sequence is YFCNKPESFL…ISNDYNTKYL (112 aa).

This chain is HIT domain-containing protein DDB_G0272839, found in Dictyostelium discoideum (Social amoeba).